Reading from the N-terminus, the 655-residue chain is Chaperone protein DnaK 3 (655 aa).

Thr-197 is subject to Phosphothreonine; by autocatalysis.

The protein belongs to the heat shock protein 70 family.

In terms of biological role, acts as a chaperone. The sequence is that of Chaperone protein DnaK 3 from Synechococcus sp. (strain ATCC 27144 / PCC 6301 / SAUG 1402/1) (Anacystis nidulans).